Consider the following 229-residue polypeptide: ATP-dependent dethiobiotin synthetase BioD (229 aa).

Residue 12–17 (GVGKTV) coordinates ATP. Thr16 contributes to the Mg(2+) binding site. Lys37 is a catalytic residue. Thr41 lines the substrate pocket. Residues Asp53, 112–115 (EGAG), and 201–203 (PAG) each bind ATP. 2 residues coordinate Mg(2+): Asp53 and Glu112.

It belongs to the dethiobiotin synthetase family. As to quaternary structure, homodimer. The cofactor is Mg(2+).

Its subcellular location is the cytoplasm. It catalyses the reaction (7R,8S)-7,8-diammoniononanoate + CO2 + ATP = (4R,5S)-dethiobiotin + ADP + phosphate + 3 H(+). It participates in cofactor biosynthesis; biotin biosynthesis; biotin from 7,8-diaminononanoate: step 1/2. Functionally, catalyzes a mechanistically unusual reaction, the ATP-dependent insertion of CO2 between the N7 and N8 nitrogen atoms of 7,8-diaminopelargonic acid (DAPA, also called 7,8-diammoniononanoate) to form a ureido ring. This Mycobacterium sp. (strain JLS) protein is ATP-dependent dethiobiotin synthetase BioD.